We begin with the raw amino-acid sequence, 130 residues long: Dihydroneopterin aldolase (130 aa).

Residues E22, Y54, and 73–74 (IE) each bind substrate. K100 serves as the catalytic Proton donor/acceptor.

It belongs to the DHNA family.

It carries out the reaction 7,8-dihydroneopterin = 6-hydroxymethyl-7,8-dihydropterin + glycolaldehyde. Its pathway is cofactor biosynthesis; tetrahydrofolate biosynthesis; 2-amino-4-hydroxy-6-hydroxymethyl-7,8-dihydropteridine diphosphate from 7,8-dihydroneopterin triphosphate: step 3/4. In terms of biological role, catalyzes the conversion of 7,8-dihydroneopterin to 6-hydroxymethyl-7,8-dihydropterin. This Methylorubrum extorquens (strain ATCC 14718 / DSM 1338 / JCM 2805 / NCIMB 9133 / AM1) (Methylobacterium extorquens) protein is Dihydroneopterin aldolase (folB).